Here is a 5073-residue protein sequence, read N- to C-terminus: Malformin synthetase mlfA (5073 aa).

The adenylation 1 stretch occupies residues glutamate 194–leucine 585. The 74-residue stretch at serine 726–glutamate 799 folds into the Carrier 1 domain. Serine 760 is subject to O-(pantetheine 4'-phosphoryl)serine. The condensation 1 stretch occupies residues glutamate 837–alanine 1268. Positions aspartate 1296–arginine 1685 are adenylation 2. The Carrier 2 domain maps to threonine 1823 to alanine 1900. An O-(pantetheine 4'-phosphoryl)serine modification is found at serine 1860. 2 disordered regions span residues glycine 1901 to aspartate 1930 and glycine 1963 to lysine 1984. 2 stretches are compositionally biased toward low complexity: residues serine 1903–aspartate 1927 and serine 1965–serine 1982. The segment at glutamate 2031–leucine 2446 is condensation 2. An adenylation 3 region spans residues serine 2469–leucine 2861. The Carrier 3 domain maps to arginine 2997–arginine 3073. Serine 3034 is subject to O-(pantetheine 4'-phosphoryl)serine. Condensation stretches follow at residues tryptophan 3090–glutamine 3555 and aspartate 3576–valine 3995. Residues histidine 4020–phenylalanine 4410 form an adenylation 4 region. The Carrier 4 domain occupies methionine 4544–asparagine 4620. At serine 4581 the chain carries O-(pantetheine 4'-phosphoryl)serine. Positions aspartate 4611–glycine 4633 are disordered. Residues arginine 4617–serine 4631 show a composition bias toward polar residues. The interval aspartate 4657–asparagine 4991 is condensation 5.

The protein belongs to the NRP synthetase family.

It participates in secondary metabolite biosynthesis. In terms of biological role, nonribosomal peptide synthetase; part of the gene cluster that mediates the biosynthesis of malformins, cyclic pentapeptides with a disulfide bond between 2 consecutive cysteins, that show potential anti-tumor as well as antimalarial and antitrypanosomal properties. The nonribosomal peptide synthetase mlfA is responsible of the formation of the cyclic pentapeptide. The malformin biosynthesis clusters in malformin-producing fungi also contain enzymes involved in the formation of the disulfide bond between the two consecutive cysteins within malformins, in addition to additional tailoring enzymes such as methyltransferases or oxidoreductases. They are also composed of up to 4 major facilitator superfamily transporters, and transcription factors probably involved in the regulation of the expression of those clusters. This is Malformin synthetase mlfA from Aspergillus tubingensis (strain CBS 134.48).